The following is a 99-amino-acid chain: Integration host factor subunit alpha (99 aa).

This sequence belongs to the bacterial histone-like protein family. Heterodimer of an alpha and a beta chain.

This protein is one of the two subunits of integration host factor, a specific DNA-binding protein that functions in genetic recombination as well as in transcriptional and translational control. The polypeptide is Integration host factor subunit alpha (ihfA) (Xanthomonas axonopodis pv. citri (strain 306)).